Here is a 347-residue protein sequence, read N- to C-terminus: Selenide, water dikinase 2 (347 aa).

Sec18 is a catalytic residue. Residue Sec18 is a non-standard amino acid, selenocysteine. ATP-binding positions include Lys21 and 48–50 (TSD). Position 51 (Asp51) interacts with Mg(2+). Residues Asp68, Asp91, and 138–140 (GHT) contribute to the ATP site. Asp91 is a binding site for Mg(2+). A Mg(2+)-binding site is contributed by Asp226.

This sequence belongs to the selenophosphate synthase 1 family. Class I subfamily. In terms of assembly, homodimer. It depends on Mg(2+) as a cofactor.

The enzyme catalyses hydrogenselenide + ATP + H2O = selenophosphate + AMP + phosphate + 2 H(+). Its function is as follows. Synthesizes selenophosphate from selenide and ATP. The polypeptide is Selenide, water dikinase 2 (Peptoclostridium acidaminophilum (Eubacterium acidaminophilum)).